We begin with the raw amino-acid sequence, 367 residues long: D-alanine--D-alanine ligase (367 aa).

Residues 139–340 (KLILKEKNIP…FSQVIDNMIS (202 aa)) enclose the ATP-grasp domain. 169–224 (KEVLEYPMIVKPARLGSSIGVKKVNDKCELEEAIETAFSFDDKVIVEKWIDSRELN) lines the ATP pocket. Mg(2+) contacts are provided by D298, E311, and N313.

This sequence belongs to the D-alanine--D-alanine ligase family. The cofactor is Mg(2+). Mn(2+) serves as cofactor.

The protein localises to the cytoplasm. The catalysed reaction is 2 D-alanine + ATP = D-alanyl-D-alanine + ADP + phosphate + H(+). Its pathway is cell wall biogenesis; peptidoglycan biosynthesis. Cell wall formation. This chain is D-alanine--D-alanine ligase, found in Thermosipho africanus (strain TCF52B).